The chain runs to 713 residues: Leucine-rich repeat-containing protein 4B (713 aa).

The first 35 residues, 1–35 (MARARGSPCPPLPPGRMSWPHGALLFLWLFSPPLG), serve as a signal peptide directing secretion. At 36-576 (AGGGGVAVTS…DLDDVMKTTK (541 aa)) the chain is on the extracellular side. In terms of domain architecture, LRRNT spans 48–86 (GGGSPPATSCPVACSCSNQASRVICTRRDLAEVPASIPV). LRR repeat units follow at residues 87–108 (NTRY…TFKH), 111–132 (HLEI…AFNG), 135–156 (SLNT…AFEY), 159–180 (KLRE…AFNR), 183–205 (SLRR…AFEG), 208–229 (NLRY…TALV), 230–251 (RLEE…SFQG), 254–275 (SLRK…AFDD), and 278–299 (SLEE…LFTP). Asn-224 carries an N-linked (GlcNAc...) asparagine glycan. 8 N-linked (GlcNAc...) asparagine glycosylation sites follow: Asn-283, Asn-333, Asn-374, Asn-400, Asn-422, Asn-425, Asn-444, and Asn-452. Residues 311 to 363 (NPWHCNCDVLWLSWWLKETVPSNTTCCARCHAPAGLKGRYIGELDQSHFTCYA) form the LRRCT domain. Residues 364-452 (PVIVEPPTDL…GNTTASATLN (89 aa)) enclose the Ig-like C2-type domain. An intrachain disulfide couples Cys-385 to Cys-436. The tract at residues 497-551 (TQPGEEALQPRGTEKEPPGPTTDGVWGGGRPGDAAGPASSSTTAPAPRSSRPTEK) is disordered. Over residues 528 to 546 (GDAAGPASSSTTAPAPRSS) the composition is skewed to low complexity. Residues 577 to 597 (IIIGCFVAITFMAAVMLVAFY) traverse the membrane as a helical segment. Residues 598-713 (KLRKQHQLHK…SKENVQETQI (116 aa)) lie on the Cytoplasmic side of the membrane. Position 693 is a phosphoserine (Ser-693). Residues 694 to 713 (IHEPLLFKSGSKENVQETQI) are disordered. Over residues 703-713 (GSKENVQETQI) the composition is skewed to basic and acidic residues.

As to quaternary structure, interacts with PTPRF. Interacts with DLG4. In terms of processing, N-glycosylated. O-glycosylated; contains sialic acid.

It localises to the membrane. It is found in the presynaptic cell membrane. Synaptic adhesion protein. Regulates the formation of excitatory synapses. The trans-synaptic adhesion between LRRC4B and PTPRF regulates the formation of excitatory synapses in a bidirectional manner. The chain is Leucine-rich repeat-containing protein 4B (LRRC4B) from Homo sapiens (Human).